The chain runs to 145 residues: Ribonuclease H (145 aa).

The 142-residue stretch at M1 to A142 folds into the RNase H type-1 domain. Mg(2+) is bound by residues D10, E48, D70, and D134.

Belongs to the RNase H family. As to quaternary structure, monomer. Requires Mg(2+) as cofactor.

Its subcellular location is the cytoplasm. It carries out the reaction Endonucleolytic cleavage to 5'-phosphomonoester.. Endonuclease that specifically degrades the RNA of RNA-DNA hybrids. The polypeptide is Ribonuclease H (Neisseria gonorrhoeae (strain ATCC 700825 / FA 1090)).